We begin with the raw amino-acid sequence, 337 residues long: Fructose-1,6-bisphosphatase class 1 (337 aa).

Glu-89, Asp-112, Leu-114, and Asp-115 together coordinate Mg(2+). Substrate is bound by residues 115–118 (DGSS), Asn-208, Tyr-241, and Lys-271. Glu-277 contributes to the Mg(2+) binding site.

This sequence belongs to the FBPase class 1 family. Homotetramer. Mg(2+) is required as a cofactor.

It is found in the cytoplasm. It carries out the reaction beta-D-fructose 1,6-bisphosphate + H2O = beta-D-fructose 6-phosphate + phosphate. It functions in the pathway carbohydrate biosynthesis; gluconeogenesis. The sequence is that of Fructose-1,6-bisphosphatase class 1 from Psychromonas ingrahamii (strain DSM 17664 / CCUG 51855 / 37).